We begin with the raw amino-acid sequence, 231 residues long: Protein OPG061 (231 aa).

It belongs to the orthopoxvirus OPG058 family.

The protein localises to the host nucleus. It localises to the host nucleolus. The chain is Protein OPG061 (OPG061) from Cynomys gunnisoni (Gunnison's prairie dog).